We begin with the raw amino-acid sequence, 438 residues long: MKPLHYTASALALGLALMGNAQAVTTIPFWHSMEGELGKEVDSLAQRFNAENPDYKIVPTYKGNYEQNLSAGIAAFRTGNAPAILQVYEVGTATMMASKAIKPVYDVFKEAGIQFDESQFVPTVSGYYSDSKTGHLLSQPFNSSTPVLYYNKDAFKKAGLDPEQPPKTWQDLADYSAKLKASGIKCGYASGWQGWIQLENFSAWNGLPFASKNNGFDGTDAVLEFNKPEQVKHIAMLEEMNKKGDFSYVGRKDESTEKFYNGDCAMTTASSGSLANIREYAKFNYGVGMMPYDADAKDAPQNAIIGGASLWVMQGKDKETYTGVAKFLDFLAKPENAAEWHQKTGYLPITKAAYDLTREQGFYEKNPGADTATRQMLNKPPLPFTKGLRLGNMPQIRVIVDEELESVWTGKKTPQQALDTAVERGNQLLRRFEKSTKS.

The N-terminal stretch at 1–23 (MKPLHYTASALALGLALMGNAQA) is a signal peptide. The sn-glycerol 3-phosphate site is built by Tyr65, Glu89, Ser144, Ser270, Gly307, Tyr346, and Arg397.

It belongs to the bacterial solute-binding protein 1 family. As to quaternary structure, the complex is composed of two ATP-binding proteins (UgpC), two transmembrane proteins (UgpA and UgpE) and a solute-binding protein (UgpB).

It localises to the periplasm. In terms of biological role, part of the ABC transporter complex UgpBAEC involved in sn-glycerol-3-phosphate (G3P) import. Binds G3P. The protein is sn-glycerol-3-phosphate-binding periplasmic protein UgpB (ugpB) of Shigella flexneri serotype 5b (strain 8401).